Reading from the N-terminus, the 240-residue chain is uncharacterized protein (240 aa).

The Cytoplasmic portion of the chain corresponds to 1–85; sequence MSGFIKSTLL…LCGCCCWTNT (85 aa). Residues 86 to 106 traverse the membrane as a helical segment; it reads IGWAPLLALLPVIGPLLMYWV. The Extracellular segment spans residues 107–131; that stretch reads HDKLIELADDRYKLPAEIKVKMHGN. Residues 132–152 form a helical membrane-spanning segment; that stretch reads IVIDLLISLVPILGSVFAWLH. The Cytoplasmic portion of the chain corresponds to 153–240; it reads ACSTRNAAIV…TNGRPQRGYR (88 aa). Residues 181–240 form a disordered region; sequence QKEENEKHSNANTAPPVVGGNKNVNGNRNNSKMYNRPPVTAPPAPAYTRSTNGRPQRGYR. Positions 197–210 are enriched in low complexity; it reads VVGGNKNVNGNRNN.

The protein resides in the membrane. This is an uncharacterized protein from Saccharomyces cerevisiae (strain ATCC 204508 / S288c) (Baker's yeast).